A 418-amino-acid chain; its full sequence is Putative ion-transport protein YfeO (418 aa).

Transmembrane regions (helical) follow at residues 15-37 (PAVA…ASVL), 57-79 (LWII…FSQG), 99-118 (ALPR…VSLG), 149-171 (ILAS…LIFS), 186-208 (LFAP…HPHF), 221-243 (TDIL…AVWC), 258-280 (VLVL…PVSL), 301-323 (YFLL…FRGG), 343-363 (VPAV…VLVV), and 376-398 (VVVP…WLLL).

Belongs to the chloride channel (TC 2.A.49) family.

Its subcellular location is the cell membrane. The chain is Putative ion-transport protein YfeO (yfeO) from Shigella flexneri.